A 311-amino-acid polypeptide reads, in one-letter code: Lipoyl synthase (311 aa).

Cysteine 58, cysteine 63, cysteine 69, cysteine 84, cysteine 88, cysteine 91, and serine 298 together coordinate [4Fe-4S] cluster. One can recognise a Radical SAM core domain in the interval 70–287 (FGHGTATFMI…EQEALAMGFR (218 aa)).

Belongs to the radical SAM superfamily. Lipoyl synthase family. It depends on [4Fe-4S] cluster as a cofactor.

It is found in the cytoplasm. It carries out the reaction [[Fe-S] cluster scaffold protein carrying a second [4Fe-4S](2+) cluster] + N(6)-octanoyl-L-lysyl-[protein] + 2 oxidized [2Fe-2S]-[ferredoxin] + 2 S-adenosyl-L-methionine + 4 H(+) = [[Fe-S] cluster scaffold protein] + N(6)-[(R)-dihydrolipoyl]-L-lysyl-[protein] + 4 Fe(3+) + 2 hydrogen sulfide + 2 5'-deoxyadenosine + 2 L-methionine + 2 reduced [2Fe-2S]-[ferredoxin]. It participates in protein modification; protein lipoylation via endogenous pathway; protein N(6)-(lipoyl)lysine from octanoyl-[acyl-carrier-protein]: step 2/2. Its function is as follows. Catalyzes the radical-mediated insertion of two sulfur atoms into the C-6 and C-8 positions of the octanoyl moiety bound to the lipoyl domains of lipoate-dependent enzymes, thereby converting the octanoylated domains into lipoylated derivatives. The chain is Lipoyl synthase from Thiobacillus denitrificans (strain ATCC 25259 / T1).